Here is a 511-residue protein sequence, read N- to C-terminus: ATP synthase subunit alpha (511 aa).

Residue 169–176 participates in ATP binding; the sequence is GDRQTGKT.

Belongs to the ATPase alpha/beta chains family. As to quaternary structure, F-type ATPases have 2 components, CF(1) - the catalytic core - and CF(0) - the membrane proton channel. CF(1) has five subunits: alpha(3), beta(3), gamma(1), delta(1), epsilon(1). CF(0) has three main subunits: a(1), b(2) and c(9-12). The alpha and beta chains form an alternating ring which encloses part of the gamma chain. CF(1) is attached to CF(0) by a central stalk formed by the gamma and epsilon chains, while a peripheral stalk is formed by the delta and b chains.

It localises to the cell inner membrane. The catalysed reaction is ATP + H2O + 4 H(+)(in) = ADP + phosphate + 5 H(+)(out). In terms of biological role, produces ATP from ADP in the presence of a proton gradient across the membrane. The alpha chain is a regulatory subunit. This chain is ATP synthase subunit alpha, found in Bartonella tribocorum (strain CIP 105476 / IBS 506).